Here is a 392-residue protein sequence, read N- to C-terminus: Phosphoglycerate kinase (392 aa).

Substrate-binding positions include 21-23 (DFN), arginine 36, 59-62 (HLGR), arginine 118, and arginine 151. Residues lysine 201, glycine 292, glutamate 323, and 349 to 352 (GGDS) contribute to the ATP site.

Belongs to the phosphoglycerate kinase family. In terms of assembly, monomer.

Its subcellular location is the cytoplasm. It catalyses the reaction (2R)-3-phosphoglycerate + ATP = (2R)-3-phospho-glyceroyl phosphate + ADP. It participates in carbohydrate degradation; glycolysis; pyruvate from D-glyceraldehyde 3-phosphate: step 2/5. This chain is Phosphoglycerate kinase, found in Borrelia turicatae (strain 91E135).